The sequence spans 184 residues: Adenine phosphoribosyltransferase (184 aa).

It belongs to the purine/pyrimidine phosphoribosyltransferase family. In terms of assembly, homodimer.

It localises to the cytoplasm. The enzyme catalyses AMP + diphosphate = 5-phospho-alpha-D-ribose 1-diphosphate + adenine. It participates in purine metabolism; AMP biosynthesis via salvage pathway; AMP from adenine: step 1/1. Functionally, catalyzes a salvage reaction resulting in the formation of AMP, that is energically less costly than de novo synthesis. This chain is Adenine phosphoribosyltransferase, found in Myxococcus xanthus (strain DK1622).